Here is a 283-residue protein sequence, read N- to C-terminus: Non-selective voltage-gated ion channel VDAC3 (283 aa).

N-acetylcysteine is present on Cys-2. Phosphothreonine is present on Thr-4. 3 positions are modified to N6-acetyllysine: Lys-12, Lys-15, and Lys-20. A run of 2 beta stranded transmembrane segments spans residues 26-35 and 39-47; these read MVKIDLRTKS and VEFSTSGHA. Residue Lys-53 forms a Glycyl lysine isopeptide (Lys-Gly) (interchain with G-Cter in ubiquitin) linkage. Beta stranded transmembrane passes span 54 to 64, 69 to 76, and 80 to 89; these read ASGNLETKYKI, LTFTQKWN, and TLGTEISWEN. Lys-90 carries the N6-acetyllysine modification. Residues 95–104 form a beta stranded membrane-spanning segment; the sequence is LKLTLDTIFV. Glycyl lysine isopeptide (Lys-Gly) (interchain with G-Cter in ubiquitin) cross-links involve residues Lys-109 and Lys-110. A run of 10 beta stranded transmembrane segments spans residues 111-120, 123-130, 137-145, 150-158, 163-175, 178-185, 189-198, 202-211, 218-227, and 231-238; these read SGKLKASYKR, FSLGSNVD, TIYGWAVLA, LAGYQMSFD, KLSQ…GYKA, FQLHTHVN, EFGGSIYQKV, IETSINLAWT, RFGIAAKYKL, and TSLSAKVN. Ser-241 carries the phosphoserine modification. NAD(+) contacts are provided by residues 242–244 and 260–264; these read LIG and SALID. The next 2 beta stranded transmembrane spans lie at 242-251 and 254-263; these read LIGLGYTQTL and GVKLTLSALI. An N6-acetyllysine; alternate modification is found at Lys-266. Lys-266 participates in a covalent cross-link: Glycyl lysine isopeptide (Lys-Gly) (interchain with G-Cter in ubiquitin); alternate. A beta stranded membrane pass occupies residues 273-282; it reads HKVGLGFELE.

This sequence belongs to the eukaryotic mitochondrial porin family. As to quaternary structure, interacts with ARMC12 in a TBC1D21-dependent manner. Interacts with MISFA. Ubiquitinated by PRKN during mitophagy, leading to its degradation and enhancement of mitophagy. Deubiquitinated by USP30.

The protein resides in the mitochondrion outer membrane. It localises to the membrane. The catalysed reaction is chloride(in) = chloride(out). It catalyses the reaction K(+)(in) = K(+)(out). Non-selective voltage-gated ion channel that mediates the transport of anions and cations through the mitochondrion outer membrane and plasma membrane. Forms a high-conducting channel with a stable open state and a voltage-induced closure with a mild preference for anions over cations. Involved in male fertility and sperm mitochondrial sheath formation. This chain is Non-selective voltage-gated ion channel VDAC3, found in Bos taurus (Bovine).